Here is a 198-residue protein sequence, read N- to C-terminus: Secreted RxLR effector protein PITG_22926 (198 aa).

A signal peptide spans M1 to P20. The short motif at R43 to R52 is the RxLR-dEER element.

Belongs to the RxLR effector family. In terms of assembly, interacts with host MAP3Kbeta2 in the nucleoplasm.

Its subcellular location is the secreted. It is found in the host nucleus. The protein localises to the host nucleolus. Functionally, secreted effector that promotes P.infestans colonization of plant host. Specifically suppresses Avr4/Cf4- and AvrPto/Pto-triggered cell death. Targets the potato MAP3Kbeta2 kinase, a positive regulator of cell death associated with plant immunity, and perturbs signaling pathways triggered by MAP3Kbeta2. The sequence is that of Secreted RxLR effector protein PITG_22926 from Phytophthora infestans (strain T30-4) (Potato late blight agent).